The sequence spans 508 residues: Phenylalanine--tRNA ligase alpha subunit (508 aa).

Ala-2 bears the N-acetylalanine mark. A phosphoserine mark is found at Ser-193 and Ser-301. Residue Lys-311 is modified to N6-acetyllysine. L-phenylalanine-binding positions include Thr-329, 372–374 (QIE), and Tyr-412. Glu-414 contributes to the Mg(2+) binding site. Phe-438 contributes to the L-phenylalanine binding site.

It belongs to the class-II aminoacyl-tRNA synthetase family. Phe-tRNA synthetase alpha subunit type 2 subfamily. In terms of assembly, heterotetramer; dimer of two heterodimers formed by FARSA and FARSB. The cofactor is Mg(2+).

It localises to the cytoplasm. It catalyses the reaction tRNA(Phe) + L-phenylalanine + ATP = L-phenylalanyl-tRNA(Phe) + AMP + diphosphate + H(+). This chain is Phenylalanine--tRNA ligase alpha subunit (Farsa), found in Mus musculus (Mouse).